A 231-amino-acid polypeptide reads, in one-letter code: Orotidine 5'-phosphate decarboxylase (231 aa).

Residues Asp-11, Lys-33, 60–69 (DLKFHDIPNT), Thr-117, Arg-178, Gln-187, Gly-207, and Arg-208 each bind substrate. The active-site Proton donor is the Lys-62.

It belongs to the OMP decarboxylase family. Type 1 subfamily. As to quaternary structure, homodimer.

It carries out the reaction orotidine 5'-phosphate + H(+) = UMP + CO2. Its pathway is pyrimidine metabolism; UMP biosynthesis via de novo pathway; UMP from orotate: step 2/2. In terms of biological role, catalyzes the decarboxylation of orotidine 5'-monophosphate (OMP) to uridine 5'-monophosphate (UMP). In Nitrosomonas eutropha (strain DSM 101675 / C91 / Nm57), this protein is Orotidine 5'-phosphate decarboxylase.